Here is an 878-residue protein sequence, read N- to C-terminus: Alanine--tRNA ligase (878 aa).

The Zn(2+) site is built by His564, His568, Cys666, and His670.

This sequence belongs to the class-II aminoacyl-tRNA synthetase family. As to quaternary structure, homotetramer. Requires Zn(2+) as cofactor.

It is found in the cytoplasm. The enzyme catalyses tRNA(Ala) + L-alanine + ATP = L-alanyl-tRNA(Ala) + AMP + diphosphate. Its function is as follows. Catalyzes the attachment of alanine to tRNA(Ala) in a two-step reaction: alanine is first activated by ATP to form Ala-AMP and then transferred to the acceptor end of tRNA(Ala). Also edits incorrectly charged Ser-tRNA(Ala) and Gly-tRNA(Ala) via its editing domain. This is Alanine--tRNA ligase from Buchnera aphidicola subsp. Acyrthosiphon pisum (strain APS) (Acyrthosiphon pisum symbiotic bacterium).